The primary structure comprises 212 residues: ATP-dependent Clp protease proteolytic subunit (212 aa).

The Nucleophile role is filled by S114. Residue H139 is part of the active site.

This sequence belongs to the peptidase S14 family. As to quaternary structure, fourteen ClpP subunits assemble into 2 heptameric rings which stack back to back to give a disk-like structure with a central cavity, resembling the structure of eukaryotic proteasomes.

Its subcellular location is the cytoplasm. It carries out the reaction Hydrolysis of proteins to small peptides in the presence of ATP and magnesium. alpha-casein is the usual test substrate. In the absence of ATP, only oligopeptides shorter than five residues are hydrolyzed (such as succinyl-Leu-Tyr-|-NHMec, and Leu-Tyr-Leu-|-Tyr-Trp, in which cleavage of the -Tyr-|-Leu- and -Tyr-|-Trp bonds also occurs).. Cleaves peptides in various proteins in a process that requires ATP hydrolysis. Has a chymotrypsin-like activity. Plays a major role in the degradation of misfolded proteins. In Laribacter hongkongensis (strain HLHK9), this protein is ATP-dependent Clp protease proteolytic subunit.